The following is a 397-amino-acid chain: Cathepsin E (397 aa).

The N-terminal stretch at Met-1–Gly-16 is a signal peptide. Positions Ile-17–Phe-49 are cleaved as a propeptide — activation peptide. A Peptidase A1 domain is found at Tyr-74 to Ala-385. Asp-92 is an active-site residue. The cysteines at positions 105 and 110 are disulfide-linked. Residue Asn-139 is glycosylated (N-linked (GlcNAc...) asparagine). Cys-268 and Cys-272 are disulfide-bonded. Asp-277 is an active-site residue. Cys-310 and Cys-344 are disulfide-bonded.

This sequence belongs to the peptidase A1 family. Homodimer; disulfide-linked. Post-translationally, glycosylated. Contains high mannose-type oligosaccharide. In terms of tissue distribution, found in the larval foregut and adult stomach.

It is found in the endosome. The catalysed reaction is Similar to cathepsin D, but slightly broader specificity.. In terms of biological role, may have a role in immune function. Probably involved in the processing of antigenic peptides during MHC class II-mediated antigen presentation. The polypeptide is Cathepsin E (CTSE) (Aquarana catesbeiana (American bullfrog)).